A 575-amino-acid polypeptide reads, in one-letter code: Reverse gyrse subunit B (575 aa).

The segment at 1–39 (MKIYYNNVCPNCSGRISNERLIKGLPCENDYPYEEGTIE) adopts an RG N-terminal-type; degenerate zinc-finger fold. Residues glutamine 83 and 100–107 (APTGMGKT) each bind ATP. Residues 87–247 (FIRAYKGYSF…KLKISGKDLE (161 aa)) enclose the Helicase ATP-binding domain. A DEAD box motif is present at residues 204-207 (DDVD). One can recognise a Helicase C-terminal domain in the interval 316-465 (QTLELIKKLG…ALKMVEEAIE (150 aa)).

This sequence belongs to the DEAD box helicase family. DDVD subfamily. As to quaternary structure, heterodimer of an RgyA and RgyB subunit.

It is found in the cytoplasm. The catalysed reaction is ATP + H2O = ADP + phosphate + H(+). Functionally, modifies the topological state of DNA by introducing positive supercoils in an ATP-dependent process. Binds to single-stranded DNA, transiently cleaves and then rejoins the end, introducing a positive supercoil in the process. The scissile phosphodiester is attacked by the catalytic tyrosine of the enzyme, resulting in the formation of a DNA-(5'-phosphotyrosyl)-enzyme intermediate. Probably involved in rewinding DNA strands in regions of the chromosome that have opened up to allow replication, transcription, DNA repair or for DNA protection. Reconstituted holoenzyme binds dsDNA a bit better than ssDNA, this subunit preferentially binds dsDNA. In isolation this subunit has DNA-stimulated ATPase activity that is stimulated by topoisomerase-domain containing RgyA. This subunit inhibits the relaxation activity of the topoisomerase subunit while promoting positive supercoiling. In Nanoarchaeum equitans (strain Kin4-M), this protein is Reverse gyrse subunit B.